A 424-amino-acid polypeptide reads, in one-letter code: MKSYFCVTPTGCLKTHTRPRIVPKHSKKCLRTYSRPRSSLSDSEGWCVVLPRDGGGRKRKADGSQGRPSNNPGRPSRKWTEKTIAAPPQGFFSRRDNGYWVPKSPEKKYVPKNLPRNMDGKKTYKDALTSPAKIQIKPTPESILLAQKIQNSTFKSRGKVTLSQTSLPLVNRFQELQLNTLLEPVEESTPFGVNDKRAQHLFCKKVERKVGRTTMLVCPITGTESHIDVKRGISARIVDSMASVVHTDKLPEYERGHVVIKNVSRTKRVCTPVPFIGTFSDRAIRVECDDHTDELASASSVPSIWKPSKKQHAVPISSSNEMGSAVGTKPDWYTPVKTCTHRQYQKVQRVFLDAMNIMRTLRFHIGPRELRETWVKCWLQVHKKNVAFPGWMITPLLSGTVPCAQEFFLPLAGENRGFVTVCQA.

Residues 51-83 (PRDGGGRKRKADGSQGRPSNNPGRPSRKWTEKT) form a disordered region.

Belongs to the nepovirus satellite RNA 48 kDa protein family.

The protein is Satellite RNA 48 kDa protein of Tomato black ring virus (strain L) (TBRV).